Here is a 241-residue protein sequence, read N- to C-terminus: Demethylmenaquinone methyltransferase (241 aa).

S-adenosyl-L-methionine is bound by residues Thr-60, Asp-81, and 106–107 (DA).

This sequence belongs to the class I-like SAM-binding methyltransferase superfamily. MenG/UbiE family.

It catalyses the reaction a 2-demethylmenaquinol + S-adenosyl-L-methionine = a menaquinol + S-adenosyl-L-homocysteine + H(+). It participates in quinol/quinone metabolism; menaquinone biosynthesis; menaquinol from 1,4-dihydroxy-2-naphthoate: step 2/2. Functionally, methyltransferase required for the conversion of demethylmenaquinol (DMKH2) to menaquinol (MKH2). In Staphylococcus epidermidis (strain ATCC 35984 / DSM 28319 / BCRC 17069 / CCUG 31568 / BM 3577 / RP62A), this protein is Demethylmenaquinone methyltransferase.